A 1407-amino-acid polypeptide reads, in one-letter code: DNA-directed RNA polymerase subunit beta' (1407 aa).

Residues cysteine 70, cysteine 72, cysteine 85, and cysteine 88 each coordinate Zn(2+). The Mg(2+) site is built by aspartate 460, aspartate 462, and aspartate 464. Zn(2+)-binding residues include cysteine 814, cysteine 888, cysteine 895, and cysteine 898.

It belongs to the RNA polymerase beta' chain family. The RNAP catalytic core consists of 2 alpha, 1 beta, 1 beta' and 1 omega subunit. When a sigma factor is associated with the core the holoenzyme is formed, which can initiate transcription. Mg(2+) is required as a cofactor. Zn(2+) serves as cofactor.

It catalyses the reaction RNA(n) + a ribonucleoside 5'-triphosphate = RNA(n+1) + diphosphate. Functionally, DNA-dependent RNA polymerase catalyzes the transcription of DNA into RNA using the four ribonucleoside triphosphates as substrates. This chain is DNA-directed RNA polymerase subunit beta', found in Salmonella paratyphi B (strain ATCC BAA-1250 / SPB7).